Here is a 376-residue protein sequence, read N- to C-terminus: Probable deoxyhypusine synthase (376 aa).

NAD(+)-binding positions include 105–109 (SNLVS), 131–133 (TAG), Glu137, and Asp238. 136-137 (EE) is a binding site for spermidine. Residue Asp243 participates in spermidine binding. Position 283 (Gly283) interacts with NAD(+). His288 provides a ligand contact to spermidine. Residue 308–309 (TG) coordinates NAD(+). Residues 314 to 316 (GSD) and 323 to 329 (EAVSWGK) each bind spermidine. Residue Lys329 is the Nucleophile of the active site. 342-343 (EA) lines the NAD(+) pocket.

This sequence belongs to the deoxyhypusine synthase family. The cofactor is NAD(+).

It carries out the reaction [eIF5A protein]-L-lysine + spermidine = [eIF5A protein]-deoxyhypusine + propane-1,3-diamine. It functions in the pathway protein modification; eIF5A hypusination. Functionally, catalyzes the NAD-dependent oxidative cleavage of spermidine and the subsequent transfer of the butylamine moiety of spermidine to the epsilon-amino group of a critical lysine residue of the eIF-5A precursor protein to form the intermediate deoxyhypusine residue. This is the first step of the post-translational modification of that lysine into an unusual amino acid residue named hypusine. Hypusination is unique to mature eIF-5A factor and is essential for its function. In Dictyostelium discoideum (Social amoeba), this protein is Probable deoxyhypusine synthase (dhps).